Reading from the N-terminus, the 517-residue chain is tRNA-2-methylthio-N(6)-dimethylallyladenosine synthase (517 aa).

The 120-residue stretch at 18–137 folds into the MTTase N-terminal domain; that stretch reads RTYQVRTYGC…LPTLLDRARH (120 aa). Residues Cys-27, Cys-66, Cys-100, Cys-174, Cys-178, and Cys-181 each contribute to the [4Fe-4S] cluster site. A Radical SAM core domain is found at 160-397; that stretch reads RESDYAAWVS…ELQEQICMEE (238 aa). The 72-residue stretch at 399 to 470 folds into the TRAM domain; that stretch reads RVLIGRIVEL…PHHLIADAGI (72 aa).

It belongs to the methylthiotransferase family. MiaB subfamily. In terms of assembly, monomer. Requires [4Fe-4S] cluster as cofactor.

The protein resides in the cytoplasm. It catalyses the reaction N(6)-dimethylallyladenosine(37) in tRNA + (sulfur carrier)-SH + AH2 + 2 S-adenosyl-L-methionine = 2-methylsulfanyl-N(6)-dimethylallyladenosine(37) in tRNA + (sulfur carrier)-H + 5'-deoxyadenosine + L-methionine + A + S-adenosyl-L-homocysteine + 2 H(+). Its function is as follows. Catalyzes the methylthiolation of N6-(dimethylallyl)adenosine (i(6)A), leading to the formation of 2-methylthio-N6-(dimethylallyl)adenosine (ms(2)i(6)A) at position 37 in tRNAs that read codons beginning with uridine. This chain is tRNA-2-methylthio-N(6)-dimethylallyladenosine synthase, found in Mycobacterium leprae (strain TN).